The primary structure comprises 168 residues: Endoribonuclease YbeY (168 aa).

Residues H119, H123, and H129 each coordinate Zn(2+).

This sequence belongs to the endoribonuclease YbeY family. Requires Zn(2+) as cofactor.

The protein resides in the cytoplasm. Its function is as follows. Single strand-specific metallo-endoribonuclease involved in late-stage 70S ribosome quality control and in maturation of the 3' terminus of the 16S rRNA. This Gluconobacter oxydans (strain 621H) (Gluconobacter suboxydans) protein is Endoribonuclease YbeY.